The chain runs to 105 residues: Replication restart protein PriB (105 aa).

The 102-residue stretch at 1-102 (MTANRLTLSG…LHAEQIELID (102 aa)) folds into the SSB domain.

This sequence belongs to the PriB family. In terms of assembly, homodimer. Interacts with PriA and DnaT. Component of the replication restart primosome. Primosome assembly occurs via a 'hand-off' mechanism. PriA binds to replication forks, subsequently PriB then DnaT bind; DnaT then displaces ssDNA to generate the helicase loading substrate.

Involved in the restart of stalled replication forks, which reloads the replicative helicase on sites other than the origin of replication; the PriA-PriB pathway is the major replication restart pathway. During primosome assembly it facilitates complex formation between PriA and DnaT on DNA; stabilizes PriA on DNA. Stimulates the DNA unwinding activity of PriA helicase. This is Replication restart protein PriB from Erwinia tasmaniensis (strain DSM 17950 / CFBP 7177 / CIP 109463 / NCPPB 4357 / Et1/99).